Reading from the N-terminus, the 471-residue chain is MKIKTRFAPSPTGYLHVGGARTALYSWLFARNHGGEFVLRIEDTDLERSTPEAIEAIMDGMNWLSLEWDEGPYFQTKRFDRYNAVIDQMLEEGTAYKCYCSKERLEALREEQMAKGEKPRYDGRCRHSHEHHADDEPCVVRFANPQEGSVVFDDQIRGPIEFSNQELDDLIIRRTDGSPTYNFCVVVDDWDMEITHVIRGEDHINNTPRQINILKALKAPVPVYAHVSMINGDDGKKLSKRHGAVSVMQYRDDGYLPEALLNYLVRLGWSHGDQEIFTREEMIKYFTLNAVSKSASAFNTDKLLWLNHHYINALPPEYVATHLQWHIEQENIDTRNGPQLADLVKLLGERCKTLKEMAQSCRYFYEDFAEFDADAAKKHLRPVARQPLEVVRDKLAAITDWTAENVHHAIQATADELEVGMGKVGMPLRVAVTGAGQSPALDVTVHAIGKTRSIERINKALAFIAERENQQ.

Residues 9–19 carry the 'HIGH' region motif; the sequence is PSPTGYLHVGG. The Zn(2+) site is built by cysteine 98, cysteine 100, cysteine 125, and histidine 127. The 'KMSKS' region signature appears at 237–241; it reads KLSKR. Lysine 240 contacts ATP.

This sequence belongs to the class-I aminoacyl-tRNA synthetase family. Glutamate--tRNA ligase type 1 subfamily. In terms of assembly, monomer. The cofactor is Zn(2+).

It is found in the cytoplasm. It carries out the reaction tRNA(Glu) + L-glutamate + ATP = L-glutamyl-tRNA(Glu) + AMP + diphosphate. Its function is as follows. Catalyzes the attachment of glutamate to tRNA(Glu) in a two-step reaction: glutamate is first activated by ATP to form Glu-AMP and then transferred to the acceptor end of tRNA(Glu). The polypeptide is Glutamate--tRNA ligase (Escherichia coli O157:H7).